Consider the following 233-residue polypeptide: Ras-related protein RABA6a (233 aa).

Position 20–27 (20–27 (GDSAVGKS)) interacts with GTP. Positions 42–50 (SKPTIGVEF) match the Effector region motif. Residues 68–72 (DTAGQ), 126–129 (NKSD), and 156–157 (SA) each bind GTP. 2 S-geranylgeranyl cysteine lipidation sites follow: cysteine 230 and cysteine 231.

It belongs to the small GTPase superfamily. Rab family.

The protein localises to the cell membrane. Functionally, intracellular vesicle trafficking and protein transport. The sequence is that of Ras-related protein RABA6a (RABA6A) from Arabidopsis thaliana (Mouse-ear cress).